The sequence spans 170 residues: Large ribosomal subunit protein uL15 (170 aa).

Over residues 1–12 the composition is skewed to basic and acidic residues; it reads MKLHDLRPAEGS. The interval 1–50 is disordered; it reads MKLHDLRPAEGSHRKRKRIGRGHGSGKVKTGGKGMMGQKARSGPGPYRTF. Residues 13-26 are compositionally biased toward basic residues; it reads HRKRKRIGRGHGSG.

This sequence belongs to the universal ribosomal protein uL15 family. Part of the 50S ribosomal subunit.

In terms of biological role, binds to the 23S rRNA. The polypeptide is Large ribosomal subunit protein uL15 (Chloroflexus aggregans (strain MD-66 / DSM 9485)).